The following is a 277-amino-acid chain: Caspase-6 (277 aa).

Positions 1–5 (MTETD) are excised as a propeptide. The segment at 25-27 (KRR) is tri-arginine exosite. S62 is subject to Phosphoserine. Residue H104 is part of the active site. The 130's region stretch occupies residues 108 to 125 (NHIYAYDAKIEIQTLTGL). C146 is a catalytic residue. Residues 163–176 (HQTDKLDDNVTQVD) constitute a propeptide that is removed on maturation. A Phosphoserine modification is found at S240. 2 S-palmitoyl cysteine lipidation sites follow: C247 and C260.

Belongs to the peptidase C14A family. As to quaternary structure, heterotetramer that consists of two anti-parallel arranged heterodimers, each one formed by a 18 kDa (p18) and a 11 kDa (p11) subunits. Interacts with BIRC6/bruce. Interacts with RIPK3. In terms of assembly, heterotetramer that consists of two anti-parallel arranged heterodimers, each one formed by a 18 kDa (Caspase-6 subunit p18) and a 11 kDa (Caspase-6 subunit p11) subunit. Post-translationally, phosphorylated by NUAK1; phosphorylation inhibits self-activation. Phosphorylation at Ser-240 by AMP-activated protein kinase (PRKAA1 or PRKAA2) inhibits autocleavage, preventing caspase activation, thereby preventing hepatocyte apoptosis. Palmitoylation by ZDHHC17 blocks dimerization and subsequent activation, leading to inhibit the cysteine protease activity. In terms of processing, can be cleaved and activated by different caspases, depending on the context. Cleaved and activated by caspase-8 (CASP8) and subsequently by caspase-3 (CASP3). Can also undergo autoactivation by mediating autocleavage at Asp-162 and Asp-176, while it is not able to cleave its N-terminal disordered prodomain. Cleaved and activated by CASP1, possibly in the context of inflammation.

The protein resides in the cytoplasm. It is found in the nucleus. It carries out the reaction Strict requirement for Asp at position P1 and has a preferred cleavage sequence of Val-Glu-His-Asp-|-.. Its activity is regulated as follows. During activation, the N-terminal disordered prodomain is removed by cleavage. Concomitantly, double cleavage gives rise to a large 18-kDa and a small 11-kDa subunit. The two large and two small subunits then assemble to form the active CASP6 complex. Can be cleaved and activated by different caspases, depending on the context. Cleaved and activated by caspase-8 (CASP8) and subsequently by caspase-3 (CASP3). Can also undergo autoactivation by mediating autocleavage at Asp-162 and Asp-176, while it is not able to cleave its N-terminal disordered prodomain. Intramolecular cleavage at Asp-176 is a prerequisite for CASP6 self-activation. Cleaved and activated by CASP1 in neurons, possibly in the context of inflammation. Phosphorylation at Ser-240 inhibits autocleavage, preventing caspase activation. Cysteine protease that plays essential roles in programmed cell death, axonal degeneration, development and innate immunity. Acts as a non-canonical executioner caspase during apoptosis: localizes in the nucleus and cleaves the nuclear structural protein NUMA1 and lamin A/LMNA thereby inducing nuclear shrinkage and fragmentation. Lamin-A/LMNA cleavage is required for chromatin condensation and nuclear disassembly during apoptotic execution. Acts as a regulator of liver damage by promoting hepatocyte apoptosis: in absence of phosphorylation by AMP-activated protein kinase (AMPK), catalyzes cleavage of BID, leading to cytochrome c release, thereby participating in nonalcoholic steatohepatitis. Cleaves PARK7/DJ-1 in cells undergoing apoptosis. Involved in intrinsic apoptosis by mediating cleavage of RIPK1. Furthermore, cleaves many transcription factors such as NF-kappa-B and cAMP response element-binding protein/CREBBP. Cleaves phospholipid scramblase proteins XKR4 and XKR9. In addition to apoptosis, involved in different forms of programmed cell death. Plays an essential role in defense against viruses by acting as a central mediator of the ZBP1-mediated pyroptosis, apoptosis, and necroptosis (PANoptosis), independently of its cysteine protease activity. PANoptosis is a unique inflammatory programmed cell death, which provides a molecular scaffold that allows the interactions and activation of machinery required for inflammasome/pyroptosis, apoptosis and necroptosis. Mechanistically, interacts with RIPK3 and enhances the interaction between RIPK3 and ZBP1, leading to ZBP1-mediated inflammasome activation and cell death. Plays an essential role in axon degeneration during axon pruning which is the remodeling of axons during neurogenesis but not apoptosis. Regulates B-cell programs both during early development and after antigen stimulation. In Rattus norvegicus (Rat), this protein is Caspase-6.